The sequence spans 371 residues: MSL complex subunit 3B (371 aa).

Disordered regions lie at residues 1-44 and 160-229; these read MATL…READ and EERA…SPQA. Residues 8–44 are compositionally biased toward basic and acidic residues; that stretch reads PKDDGEGKDEGGSDRGDGDPKPKGKKEVEAHTRREAD. The region spanning 44–367 is the MRG domain; the sequence is DERAVRIPIP…CEAHYSSKNP (324 aa). The segment covering 206–216 has biased composition (basic residues); that stretch reads APRRSTRHSTH.

The protein resides in the nucleus. In terms of biological role, probable non-catalytic component of the MSL histone acetyltransferase complex, a multiprotein complex that mediates the majority of histone H4 acetylation at 'Lys-16' (H4K16ac), an epigenetic mark that prevents chromatin compaction. In Rattus norvegicus (Rat), this protein is MSL complex subunit 3B.